The chain runs to 281 residues: Glutamate racemase (281 aa).

Residues 13–14 (DS) and 45–46 (YG) contribute to the substrate site. Cys-76 functions as the Proton donor/acceptor in the catalytic mechanism. 77–78 (NT) is a binding site for substrate. Residue Cys-185 is the Proton donor/acceptor of the active site. Residue 186-187 (TH) coordinates substrate.

The protein belongs to the aspartate/glutamate racemases family.

The enzyme catalyses L-glutamate = D-glutamate. It functions in the pathway cell wall biogenesis; peptidoglycan biosynthesis. Functionally, provides the (R)-glutamate required for cell wall biosynthesis. In Rippkaea orientalis (strain PCC 8801 / RF-1) (Cyanothece sp. (strain PCC 8801)), this protein is Glutamate racemase.